The primary structure comprises 691 residues: Dipeptidyl peptidase 3 (691 aa).

Position 431 (H431) interacts with Zn(2+). The active site involves E432. The Zn(2+) site is built by H436 and E492.

Belongs to the peptidase M49 family. The cofactor is Zn(2+).

It localises to the cytoplasm. It catalyses the reaction Release of an N-terminal dipeptide from a peptide comprising four or more residues, with broad specificity. Also acts on dipeptidyl 2-naphthylamides.. The polypeptide is Dipeptidyl peptidase 3 (dpp3-1) (Dictyostelium discoideum (Social amoeba)).